The sequence spans 234 residues: 2-hydroxy-3-keto-5-methylthiopentenyl-1-phosphate phosphatase (234 aa).

Belongs to the HAD-like hydrolase superfamily. MtnX family.

It catalyses the reaction 2-hydroxy-5-methylsulfanyl-3-oxopent-1-enyl phosphate + H2O = 1,2-dihydroxy-5-(methylsulfanyl)pent-1-en-3-one + phosphate. It participates in amino-acid biosynthesis; L-methionine biosynthesis via salvage pathway; L-methionine from S-methyl-5-thio-alpha-D-ribose 1-phosphate: step 4/6. Functionally, dephosphorylates 2-hydroxy-3-keto-5-methylthiopentenyl-1-phosphate (HK-MTPenyl-1-P) yielding 1,2-dihydroxy-3-keto-5-methylthiopentene (DHK-MTPene). This chain is 2-hydroxy-3-keto-5-methylthiopentenyl-1-phosphate phosphatase, found in Bacillus velezensis (strain DSM 23117 / BGSC 10A6 / LMG 26770 / FZB42) (Bacillus amyloliquefaciens subsp. plantarum).